An 876-amino-acid chain; its full sequence is AP-5 complex subunit beta-1 (876 aa).

In terms of assembly, probably part of the adaptor protein complex 5 (AP-5), a tetramer composed of AP5B1, AP5M1, AP5S1 and AP5Z1. Interacts with ZFYVE26 and SPG11.

In terms of biological role, as part of AP-5, a probable fifth adaptor protein complex, it may be involved in endosomal transport. This is AP-5 complex subunit beta-1 (Ap5b1) from Rattus norvegicus (Rat).